Reading from the N-terminus, the 108-residue chain is Large ribosomal subunit protein uL24 (108 aa).

Belongs to the universal ribosomal protein uL24 family. Part of the 50S ribosomal subunit.

One of two assembly initiator proteins, it binds directly to the 5'-end of the 23S rRNA, where it nucleates assembly of the 50S subunit. Functionally, one of the proteins that surrounds the polypeptide exit tunnel on the outside of the subunit. The polypeptide is Large ribosomal subunit protein uL24 (Geobacter metallireducens (strain ATCC 53774 / DSM 7210 / GS-15)).